We begin with the raw amino-acid sequence, 1226 residues long: Receptor-type tyrosine-protein phosphatase O (1226 aa).

The N-terminal stretch at 1–29 is a signal peptide; sequence MGHLPRGTLGGRRLLPLLGLFVLLKIVTT. One can recognise a Fibronectin type-III 1 domain in the interval 30–115; it reads FHVAVQDDNN…TKPSRSITVL (86 aa). Residues 30–832 are Extracellular-facing; the sequence is FHVAVQDDNN…VTEVNPNVVV (803 aa). Asn-75, Asn-154, and Asn-227 each carry an N-linked (GlcNAc...) asparagine glycan. The tract at residues 242 to 305 is disordered; the sequence is EPSGSFPEDS…PNSTDYESTS (64 aa). Residues 260–270 show a composition bias toward basic and acidic residues; it reads IGRDRRFHFPE. The segment covering 277-291 has biased composition (low complexity); the sequence is PSNVSSGSPPSNVSS. N-linked (GlcNAc...) asparagine glycosylation occurs at Asn-279. Residues 296 to 305 show a composition bias toward polar residues; that stretch reads PNSTDYESTS. Fibronectin type-III domains are found at residues 339–435, 445–541, 542–638, 641–734, and 735–827; these read RTEK…ISPT, KPQH…IVPT, GIKD…TISF, APVA…LEPA, and PPKS…TEVN. Asn-471 and Asn-500 each carry an N-linked (GlcNAc...) asparagine glycan. N-linked (GlcNAc...) asparagine glycosylation is found at Asn-710, Asn-743, and Asn-800. Residues 833–853 traverse the membrane as a helical segment; sequence ISVLAILSTLLIGLLLVTLVI. At 854–1226 the chain is on the cytoplasmic side; it reads LRKKHLQMAR…DVIYENVSKS (373 aa). A Phosphoserine modification is found at Ser-875. Residues 948–1205 form the Tyrosine-protein phosphatase domain; it reads FSLQFEELKL…IFIHQCVQLM (258 aa). Residues Asp-1112, 1146-1152, and Gln-1190 each bind substrate; that span reads CSAGVGR. Catalysis depends on Cys-1146, which acts as the Phosphocysteine intermediate. Tyr-1220 is subject to Phosphotyrosine.

This sequence belongs to the protein-tyrosine phosphatase family. Receptor class 3 subfamily. Interacts (phosphorylated form) with FYN and GRB2.

The protein localises to the membrane. It catalyses the reaction O-phospho-L-tyrosyl-[protein] + H2O = L-tyrosyl-[protein] + phosphate. Its function is as follows. Possesses tyrosine phosphatase activity. Plays a role in regulating the glomerular pressure/filtration rate relationship through an effect on podocyte structure and function. The protein is Receptor-type tyrosine-protein phosphatase O (Ptpro) of Mus musculus (Mouse).